We begin with the raw amino-acid sequence, 314 residues long: Nodulation protein D 1 (314 aa).

Residues Leu6 to Thr63 enclose the HTH lysR-type domain. Positions Leu23–Gly42 form a DNA-binding region, H-T-H motif.

It belongs to the LysR transcriptional regulatory family.

Functionally, nodD regulates the expression of the nodABCFE genes which encode other nodulation proteins. NodD is also a negative regulator of its own expression. Binds flavonoids as inducers. This is Nodulation protein D 1 (nodD1) from Rhizobium leguminosarum bv. phaseoli.